Consider the following 261-residue polypeptide: Cytochrome c oxidase subunit 3 (261 aa).

Residues 1–15 (MVHQSHAYHMLKPSP) lie on the Mitochondrial matrix side of the membrane. A helical membrane pass occupies residues 16–34 (WPLTGALSALLMTSGLAMW). Topologically, residues 35–40 (FHFHST) are mitochondrial intermembrane. The helical transmembrane segment at 41–66 (TLLLTGMLTNALTMYQWWRDVVREST) threads the bilayer. The Mitochondrial matrix segment spans residues 67–72 (YQGHHT). Residues 73–105 (LPVQKGLRYGMILFITSEVFFFAGFFWAFYHSS) form a helical membrane-spanning segment. The Mitochondrial intermembrane portion of the chain corresponds to 106–128 (LAPTPQLGGHWPPTGITPLNPLE). The helical transmembrane segment at 129-152 (VPLLNTAVLLASGVSITWAHHSLM) threads the bilayer. Over 153–155 (ENN) the chain is Mitochondrial matrix. Residues 156–183 (RTQMIQALLITILLGIYFTLLQASEYIE) form a helical membrane-spanning segment. Over 184–190 (APFTISD) the chain is Mitochondrial intermembrane. Residues 191 to 223 (GIYGSTFFMTTGFHGLHVIIGSTFLTVCLSCQL) form a helical membrane-spanning segment. Residues 224–232 (LFHFTSKHH) are Mitochondrial matrix-facing. The helical transmembrane segment at 233 to 256 (FGFEAAAWYWHFVDVVWLFLYVSI) threads the bilayer. Over 257 to 261 (YWWGS) the chain is Mitochondrial intermembrane.

The protein belongs to the cytochrome c oxidase subunit 3 family. Component of the cytochrome c oxidase (complex IV, CIV), a multisubunit enzyme composed of 14 subunits. The complex is composed of a catalytic core of 3 subunits MT-CO1, MT-CO2 and MT-CO3, encoded in the mitochondrial DNA, and 11 supernumerary subunits COX4I, COX5A, COX5B, COX6A, COX6B, COX6C, COX7A, COX7B, COX7C, COX8 and NDUFA4, which are encoded in the nuclear genome. The complex exists as a monomer or a dimer and forms supercomplexes (SCs) in the inner mitochondrial membrane with NADH-ubiquinone oxidoreductase (complex I, CI) and ubiquinol-cytochrome c oxidoreductase (cytochrome b-c1 complex, complex III, CIII), resulting in different assemblies (supercomplex SCI(1)III(2)IV(1) and megacomplex MCI(2)III(2)IV(2)).

Its subcellular location is the mitochondrion inner membrane. It catalyses the reaction 4 Fe(II)-[cytochrome c] + O2 + 8 H(+)(in) = 4 Fe(III)-[cytochrome c] + 2 H2O + 4 H(+)(out). In terms of biological role, component of the cytochrome c oxidase, the last enzyme in the mitochondrial electron transport chain which drives oxidative phosphorylation. The respiratory chain contains 3 multisubunit complexes succinate dehydrogenase (complex II, CII), ubiquinol-cytochrome c oxidoreductase (cytochrome b-c1 complex, complex III, CIII) and cytochrome c oxidase (complex IV, CIV), that cooperate to transfer electrons derived from NADH and succinate to molecular oxygen, creating an electrochemical gradient over the inner membrane that drives transmembrane transport and the ATP synthase. Cytochrome c oxidase is the component of the respiratory chain that catalyzes the reduction of oxygen to water. Electrons originating from reduced cytochrome c in the intermembrane space (IMS) are transferred via the dinuclear copper A center (CU(A)) of subunit 2 and heme A of subunit 1 to the active site in subunit 1, a binuclear center (BNC) formed by heme A3 and copper B (CU(B)). The BNC reduces molecular oxygen to 2 water molecules using 4 electrons from cytochrome c in the IMS and 4 protons from the mitochondrial matrix. The protein is Cytochrome c oxidase subunit 3 (MT-CO3) of Pongo pygmaeus (Bornean orangutan).